A 414-amino-acid chain; its full sequence is Esterase FrsA (414 aa).

Belongs to the FrsA family.

It catalyses the reaction a carboxylic ester + H2O = an alcohol + a carboxylate + H(+). In terms of biological role, catalyzes the hydrolysis of esters. The sequence is that of Esterase FrsA from Escherichia coli O45:K1 (strain S88 / ExPEC).